Reading from the N-terminus, the 208-residue chain is uncharacterized protein (208 aa).

An N-terminal signal peptide occupies residues M1–A34.

This is an uncharacterized protein from Sinorhizobium fredii (strain NBRC 101917 / NGR234).